Consider the following 243-residue polypeptide: tRNA pseudouridine synthase A (243 aa).

Asp-54 acts as the Nucleophile in catalysis. Tyr-112 serves as a coordination point for substrate.

This sequence belongs to the tRNA pseudouridine synthase TruA family. As to quaternary structure, homodimer.

The enzyme catalyses uridine(38/39/40) in tRNA = pseudouridine(38/39/40) in tRNA. Functionally, formation of pseudouridine at positions 38, 39 and 40 in the anticodon stem and loop of transfer RNAs. The sequence is that of tRNA pseudouridine synthase A from Onion yellows phytoplasma (strain OY-M).